A 366-amino-acid polypeptide reads, in one-letter code: Anhydro-N-acetylmuramic acid kinase (366 aa).

Residue 12 to 19 coordinates ATP; sequence GTSMDGAD.

Belongs to the anhydro-N-acetylmuramic acid kinase family.

It catalyses the reaction 1,6-anhydro-N-acetyl-beta-muramate + ATP + H2O = N-acetyl-D-muramate 6-phosphate + ADP + H(+). Its pathway is amino-sugar metabolism; 1,6-anhydro-N-acetylmuramate degradation. It functions in the pathway cell wall biogenesis; peptidoglycan recycling. Functionally, catalyzes the specific phosphorylation of 1,6-anhydro-N-acetylmuramic acid (anhMurNAc) with the simultaneous cleavage of the 1,6-anhydro ring, generating MurNAc-6-P. Is required for the utilization of anhMurNAc either imported from the medium or derived from its own cell wall murein, and thus plays a role in cell wall recycling. The sequence is that of Anhydro-N-acetylmuramic acid kinase from Neisseria meningitidis serogroup C (strain 053442).